The primary structure comprises 341 residues: L-threonine 3-dehydrogenase (341 aa).

A Zn(2+)-binding site is contributed by C38. Catalysis depends on charge relay system residues T40 and H43. Residues H63, E64, C93, C96, C99, and C107 each coordinate Zn(2+). NAD(+) contacts are provided by residues I175, D195, R200, 262 to 264 (LGI), and 286 to 287 (IY).

This sequence belongs to the zinc-containing alcohol dehydrogenase family. Homotetramer. The cofactor is Zn(2+).

Its subcellular location is the cytoplasm. It catalyses the reaction L-threonine + NAD(+) = (2S)-2-amino-3-oxobutanoate + NADH + H(+). It functions in the pathway amino-acid degradation; L-threonine degradation via oxydo-reductase pathway; glycine from L-threonine: step 1/2. Its function is as follows. Catalyzes the NAD(+)-dependent oxidation of L-threonine to 2-amino-3-ketobutyrate. The chain is L-threonine 3-dehydrogenase from Shewanella woodyi (strain ATCC 51908 / MS32).